Consider the following 280-residue polypeptide: Endochitinase A (280 aa).

The signal sequence occupies residues 1–25 (MANAPRILALGLLALLCAAAGPAAA). Residues 26–60 (QNCGCQPNFCCSKFGYCGTTDAYCGDGCQSGPCRS) enclose the Chitin-binding type-1 domain. Disulfide bonds link Cys28/Cys36, Cys30/Cys42, Cys35/Cys49, and Cys53/Cys58. The segment at 61 to 77 (GGGGGGGGGGGGGGSGG) is hinge region (poly-Gly). A catalytic region spans residues 78–280 (ANVANVVTDA…RVDPGPNLTC (203 aa)). Cys100 and Cys149 are oxidised to a cystine. The active-site Proton donor is the Glu144. N-linked (GlcNAc...) asparagine glycosylation occurs at Asn155. 2 disulfide bridges follow: Cys161–Cys170 and Cys248–Cys280. Residue Asn277 is glycosylated (N-linked (GlcNAc...) asparagine).

The protein belongs to the glycosyl hydrolase 19 family. Chitinase class IV subfamily.

The protein localises to the secreted. The catalysed reaction is Random endo-hydrolysis of N-acetyl-beta-D-glucosaminide (1-&gt;4)-beta-linkages in chitin and chitodextrins.. Inactivated by l-ethyl-3-(3-dimethylaminopropyl)carbodiimide (EDC) in the absence of exogenous nucleophiles (e.g. GlcNAc4, GlcNAc3 and GlcNAc2). Not inhibited by tetra-N-acetylchitopentaose or modified chitotetraose substrate TMG-chitotriomycin-pMP, containing a free, non-acetylated glucosaminyl residue or a N-trimethylamino glucosamine (TMG) residue at the non-reducing terminus, respectively. Its function is as follows. Defense against chitin-containing fungal pathogens. Hydrolyzes glycol chitin and tetra-N-acetylchitotetraose in vitro. Its action is countered by fungal polyglycine hydrolases and fungalysin, that cleave the chitin-binding domain from the protein. This is Endochitinase A from Zea mays (Maize).